Reading from the N-terminus, the 332-residue chain is L-lactate dehydrogenase (332 aa).

Residues 29 to 57 (GQVG…CADK) and Arg99 contribute to the NAD(+) site. 3 residues coordinate substrate: Arg106, Asn138, and Arg169. Asn138 is an NAD(+) binding site. Residue His193 is the Proton acceptor of the active site. Thr248 is a substrate binding site.

The protein belongs to the LDH/MDH superfamily. LDH family. As to quaternary structure, homotetramer.

It is found in the cytoplasm. It carries out the reaction (S)-lactate + NAD(+) = pyruvate + NADH + H(+). It participates in fermentation; pyruvate fermentation to lactate; (S)-lactate from pyruvate: step 1/1. This is L-lactate dehydrogenase from Drosophila melanogaster (Fruit fly).